The chain runs to 131 residues: Large ribosomal subunit protein bL12c (131 aa).

Residues 107 to 131 form a disordered region; it reads QGVSKDDAEASKKQLEDAGAKVKIS. Basic and acidic residues predominate over residues 110–131; that stretch reads SKDDAEASKKQLEDAGAKVKIS.

It belongs to the bacterial ribosomal protein bL12 family. As to quaternary structure, homodimer. Part of the ribosomal stalk of the 50S ribosomal subunit. Forms a multimeric L10(L12)X complex, where L10 forms an elongated spine to which 2 to 4 L12 dimers bind in a sequential fashion. Binds GTP-bound translation factors.

It localises to the plastid. It is found in the chloroplast. Forms part of the ribosomal stalk which helps the ribosome interact with GTP-bound translation factors. Is thus essential for accurate translation. This is Large ribosomal subunit protein bL12c from Chlorella vulgaris (Green alga).